A 168-amino-acid polypeptide reads, in one-letter code: G/U mismatch-specific DNA glycosylase (168 aa).

This sequence belongs to the uracil-DNA glycosylase (UDG) superfamily. TDG/mug family. As to quaternary structure, binds DNA as a monomer.

Its subcellular location is the cytoplasm. The catalysed reaction is Specifically hydrolyzes mismatched double-stranded DNA and polynucleotides, releasing free uracil.. In terms of biological role, excises ethenocytosine and uracil, which can arise by alkylation or deamination of cytosine, respectively, from the corresponding mispairs with guanine in ds-DNA. It is capable of hydrolyzing the carbon-nitrogen bond between the sugar-phosphate backbone of the DNA and the mispaired base. The complementary strand guanine functions in substrate recognition. Required for DNA damage lesion repair in stationary-phase cells. This chain is G/U mismatch-specific DNA glycosylase, found in Salmonella gallinarum (strain 287/91 / NCTC 13346).